A 477-amino-acid polypeptide reads, in one-letter code: Glycogen synthase (477 aa).

K15 contacts ADP-alpha-D-glucose.

This sequence belongs to the glycosyltransferase 1 family. Bacterial/plant glycogen synthase subfamily.

It catalyses the reaction [(1-&gt;4)-alpha-D-glucosyl](n) + ADP-alpha-D-glucose = [(1-&gt;4)-alpha-D-glucosyl](n+1) + ADP + H(+). It participates in glycan biosynthesis; glycogen biosynthesis. Functionally, synthesizes alpha-1,4-glucan chains using ADP-glucose. In Streptococcus pneumoniae (strain ATCC 700669 / Spain 23F-1), this protein is Glycogen synthase.